A 234-amino-acid chain; its full sequence is Purine nucleoside phosphorylase DeoD-type (234 aa).

Histidine 5 contributes to the a purine D-ribonucleoside binding site. Residues glycine 21, arginine 25, arginine 44, and 88 to 91 each bind phosphate; that span reads RIGT. Residues 180–182 and 204–205 each bind a purine D-ribonucleoside; these read DME and SD. Aspartate 205 (proton donor) is an active-site residue.

Belongs to the PNP/UDP phosphorylase family. As to quaternary structure, homohexamer; trimer of homodimers.

It carries out the reaction a purine D-ribonucleoside + phosphate = a purine nucleobase + alpha-D-ribose 1-phosphate. It catalyses the reaction a purine 2'-deoxy-D-ribonucleoside + phosphate = a purine nucleobase + 2-deoxy-alpha-D-ribose 1-phosphate. Catalyzes the reversible phosphorolytic breakdown of the N-glycosidic bond in the beta-(deoxy)ribonucleoside molecules, with the formation of the corresponding free purine bases and pentose-1-phosphate. The chain is Purine nucleoside phosphorylase DeoD-type from Buchnera aphidicola subsp. Acyrthosiphon pisum (strain 5A).